Here is a 101-residue protein sequence, read N- to C-terminus: MLSLSHYLILGAVLFAISVVGIFLNRKNLIVLLMAIELMLLAVNLNFIAFSHYLGDIAGQVFVFFILTVAAAESAIGLAILVVMFRNLRTIHVDDLDSLKG.

Transmembrane regions (helical) follow at residues 4–24 (LSHY…GIFL), 30–50 (IVLL…FIAF), and 61–81 (VFVF…LAIL).

This sequence belongs to the complex I subunit 4L family. NDH-1 is composed of 14 different subunits. Subunits NuoA, H, J, K, L, M, N constitute the membrane sector of the complex.

It is found in the cell inner membrane. It carries out the reaction a quinone + NADH + 5 H(+)(in) = a quinol + NAD(+) + 4 H(+)(out). Functionally, NDH-1 shuttles electrons from NADH, via FMN and iron-sulfur (Fe-S) centers, to quinones in the respiratory chain. The immediate electron acceptor for the enzyme in this species is believed to be ubiquinone. Couples the redox reaction to proton translocation (for every two electrons transferred, four hydrogen ions are translocated across the cytoplasmic membrane), and thus conserves the redox energy in a proton gradient. The protein is NADH-quinone oxidoreductase subunit K of Azoarcus sp. (strain BH72).